Reading from the N-terminus, the 468-residue chain is UDP-N-acetylmuramoylalanine--D-glutamate ligase (468 aa).

Residue 117 to 123 participates in ATP binding; the sequence is GTDGKTT.

Belongs to the MurCDEF family.

The protein localises to the cytoplasm. It carries out the reaction UDP-N-acetyl-alpha-D-muramoyl-L-alanine + D-glutamate + ATP = UDP-N-acetyl-alpha-D-muramoyl-L-alanyl-D-glutamate + ADP + phosphate + H(+). Its pathway is cell wall biogenesis; peptidoglycan biosynthesis. Cell wall formation. Catalyzes the addition of glutamate to the nucleotide precursor UDP-N-acetylmuramoyl-L-alanine (UMA). This is UDP-N-acetylmuramoylalanine--D-glutamate ligase from Chloroherpeton thalassium (strain ATCC 35110 / GB-78).